The chain runs to 211 residues: Protein Nef (211 aa).

G2 carries N-myristoyl glycine; by host lipidation. Position 6 is a phosphoserine; by host (S6). The segment at 67–70 (EDEE) is acidic; interacts with host PACS1 and PACS2; stabilizes the interaction of NEF/MHC-I with host AP1M1; necessary for MHC-I internalization. Residues 74 to 83 (PVRPQVPLRP) are SH3-binding; interaction with Src family tyrosine kinases. The PxxP; stabilizes the interaction of NEF/MHC-I with host AP1M1; necessary for MHC-I internalization signature appears at 77 to 80 (PQVP). The segment at 113 to 129 (DILDLWVYHTQGYFPDW) is mediates dimerization, Nef-PTE1 interaction. Residues 153–185 (MDPDQVEEANEGENNSLLHPISLHGMDDPEKEV) are binding to ATP6V1H. A Dileucine internalization motif; necessary for CD4 internalization motif is present at residues 169 to 170 (LL). Residues 179 to 180 (DD) carry the Diacidic; necessary for CD4 internalization motif.

It belongs to the lentivirus primate group Nef protein family. As to quaternary structure, monomer; cytosolic form. Homodimer; membrane bound form. Interacts with Nef associated p21-activated kinase (PAK2); this interaction activates PAK2. Associates with the Nef-MHC-I-AP1 complex; this complex is required for MHC-I internalization. Interacts (via C-terminus) with host PI3-kinase. Interacts with host PACS1; this interaction seems to be weak. Interacts with host PACS2. Interacts with host LCK and MAPK3; these interactions inhibit the kinase activity of the latter. Interacts with host ATP6V1H; this interaction may play a role in CD4 endocytosis. Associates with the CD4-Nef-AP2 complex; this complex is required for CD4 internalization. Interacts with host AP2 subunit alpha and AP2 subunit sigma2. Interacts with TCR-zeta chain; this interaction up-regulates the Fas ligand (FasL) surface expression. Interacts with host HCK, LYN, and SRC; these interactions activate the Src family kinases. Interacts with MAP3K5; this interaction inhibits the Fas and TNFR-mediated death signals. Interacts with beta-COP and PTE1. Interacts with human RACK1; this increases Nef phosphorylation by PKC. Interacts with TP53; this interaction decreases the half-life of TP53, protecting the infected cell against p53-mediated apoptosis. Post-translationally, the virion-associated Nef proteins are cleaved by the viral protease to release the soluble C-terminal core protein. Nef is probably cleaved concomitantly with viral structural proteins on maturation of virus particles. Myristoylated. In terms of processing, phosphorylated on serine residues, probably by host PKCdelta and theta.

The protein localises to the host cell membrane. Its subcellular location is the virion. It localises to the secreted. It is found in the host Golgi apparatus membrane. Factor of infectivity and pathogenicity, required for optimal virus replication. Alters numerous pathways of T-lymphocyte function and down-regulates immunity surface molecules in order to evade host defense and increase viral infectivity. Alters the functionality of other immunity cells, like dendritic cells, monocytes/macrophages and NK cells. Its function is as follows. In infected CD4(+) T-lymphocytes, down-regulates the surface MHC-I, mature MHC-II, CD4, CD28, CCR5 and CXCR4 molecules. Mediates internalization and degradation of host CD4 through the interaction of with the cytoplasmic tail of CD4, the recruitment of AP-2 (clathrin adapter protein complex 2), internalization through clathrin coated pits, and subsequent transport to endosomes and lysosomes for degradation. Diverts host MHC-I molecules to the trans-Golgi network-associated endosomal compartments by an endocytic pathway to finally target them for degradation. MHC-I down-regulation may involve AP-1 (clathrin adapter protein complex 1) or possibly Src family kinase-ZAP70/Syk-PI3K cascade recruited by PACS2. In consequence infected cells are masked for immune recognition by cytotoxic T-lymphocytes. Decreasing the number of immune receptors also prevents reinfection by more HIV particles (superinfection). Down-regulates host SERINC3 and SERINC5 thereby excluding these proteins from the viral particles. Virion infectivity is drastically higher when SERINC3 or SERINC5 are excluded from the viral envelope, because these host antiviral proteins impair the membrane fusion event necessary for subsequent virion penetration. In terms of biological role, bypasses host T-cell signaling by inducing a transcriptional program nearly identical to that of anti-CD3 cell activation. Interaction with TCR-zeta chain up-regulates the Fas ligand (FasL). Increasing surface FasL molecules and decreasing surface MHC-I molecules on infected CD4(+) cells send attacking cytotoxic CD8+ T-lymphocytes into apoptosis. Functionally, plays a role in optimizing the host cell environment for viral replication without causing cell death by apoptosis. Protects the infected cells from apoptosis in order to keep them alive until the next virus generation is ready to strike. Inhibits the Fas and TNFR-mediated death signals by blocking MAP3K5/ASK1. Decreases the half-life of TP53, protecting the infected cell against p53-mediated apoptosis. Inhibits the apoptotic signals regulated by the Bcl-2 family proteins through the formation of a Nef/PI3-kinase/PAK2 complex that leads to activation of PAK2 and induces phosphorylation of host BAD. Extracellular Nef protein targets CD4(+) T-lymphocytes for apoptosis by interacting with CXCR4 surface receptors. The protein is Protein Nef of Homo sapiens (Human).